The chain runs to 257 residues: Snake venom serine protease KN11 (257 aa).

The signal sequence occupies residues 1–18 (MVLIRVLANLLILQLSYA). Residues 19–24 (QKSSEL) constitute a propeptide that is removed on maturation. Residues 25–248 (VTGGHPCNIN…HLDWIKSIIA (224 aa)) form the Peptidase S1 domain. 6 disulfide bridges follow: Cys-31-Cys-162, Cys-49-Cys-65, Cys-97-Cys-255, Cys-141-Cys-209, Cys-173-Cys-188, and Cys-199-Cys-224. Residues His-64 and Asp-109 each act as charge relay system in the active site. Residues Asn-120 and Asn-121 are each glycosylated (N-linked (GlcNAc...) asparagine). The Charge relay system role is filled by Ser-203.

It belongs to the peptidase S1 family. Snake venom subfamily. As to quaternary structure, monomer. As to expression, expressed by the venom gland.

Its subcellular location is the secreted. In terms of biological role, snake venom serine protease that may act in the hemostasis system of the prey. This Trimeresurus stejnegeri (Chinese green tree viper) protein is Snake venom serine protease KN11.